A 1456-amino-acid polypeptide reads, in one-letter code: Ig-like and fibronectin type-III domain-containing protein C27B7.7 (1456 aa).

The N-terminal stretch at 1-16 (MISLSLVLLLLFGVRC) is a signal peptide. 2 consecutive Fibronectin type-III domains span residues 24–128 (NDDS…SINT) and 132–227 (IPKA…TNST). 5 N-linked (GlcNAc...) asparagine glycosylation sites follow: Asn64, Asn146, Asn164, Asn198, and Asn225. One can recognise an Ig-like 1 domain in the interval 236–322 (PDEEYTADPQ…DAGDSSKEVN (87 aa)). Cys254 and Cys308 are joined by a disulfide. A Fibronectin type-III 3 domain is found at 328–426 (PGSPPSEITL…VAMERDTQPI (99 aa)). Asn471, Asn497, and Asn517 each carry an N-linked (GlcNAc...) asparagine glycan. Fibronectin type-III domains are found at residues 531-631 (APTQ…TLNG), 636-736 (PPDN…TAYS), and 737-846 (EVPI…WFRT). 3 N-linked (GlcNAc...) asparagine glycosylation sites follow: Asn658, Asn691, and Asn692. An Ig-like 2 domain is found at 841–948 (PRWFRTGHGK…GSSSASVEIR (108 aa)). Cys877 and Cys932 are joined by a disulfide. Asn893, Asn898, Asn969, Asn1091, Asn1120, Asn1133, Asn1151, Asn1207, Asn1268, Asn1277, Asn1298, Asn1350, Asn1357, and Asn1382 each carry an N-linked (GlcNAc...) asparagine glycan. In terms of domain architecture, Fibronectin type-III 7 spans 955–1050 (PPENIILTAY…SCISDVLYET (96 aa)). Fibronectin type-III domains lie at 1148 to 1234 (APTN…TPNG), 1236 to 1343 (PKTA…ISFD), and 1347 to 1438 (VIDN…SSPS). The disordered stretch occupies residues 1419-1456 (LGRESPPSEEIDLEFISSPSPTPIISGSRRKVIKEPPL). Positions 1434 to 1445 (ISSPSPTPIISG) are enriched in low complexity.

The protein resides in the secreted. This chain is Ig-like and fibronectin type-III domain-containing protein C27B7.7, found in Caenorhabditis elegans.